The chain runs to 257 residues: uncharacterized protein (257 aa).

A helical transmembrane segment spans residues 7 to 27 (LMLGICLVLLIILIVGYVIMT).

This sequence belongs to the staphylococcal tandem lipoprotein family.

The protein localises to the cell membrane. This is an uncharacterized protein from Staphylococcus aureus (strain Mu50 / ATCC 700699).